The following is a 74-amino-acid chain: Brevinin-2Ta (74 aa).

The N-terminal stretch at 1 to 22 (MFTMKKSLLLFFFLGTISLSLC) is a signal peptide. Residues 23 to 41 (QEERNADEDDGEMTEEEKR) constitute a propeptide that is removed on maturation. Cysteines 68 and 74 form a disulfide.

The protein belongs to the frog skin active peptide (FSAP) family. Brevinin subfamily. Expressed by the skin glands.

It is found in the secreted. Antimicrobial peptide. In Rana temporaria (European common frog), this protein is Brevinin-2Ta.